Here is a 157-residue protein sequence, read N- to C-terminus: Small ribosomal subunit protein uS7 (157 aa).

The protein belongs to the universal ribosomal protein uS7 family. Part of the 30S ribosomal subunit. Contacts proteins S9 and S11.

One of the primary rRNA binding proteins, it binds directly to 16S rRNA where it nucleates assembly of the head domain of the 30S subunit. Is located at the subunit interface close to the decoding center, probably blocks exit of the E-site tRNA. The chain is Small ribosomal subunit protein uS7 from Chlamydia felis (strain Fe/C-56) (Chlamydophila felis).